The sequence spans 1068 residues: Carbamoyl phosphate synthase large chain (1068 aa).

Residues 1 to 401 (MPLNKDIKKV…AFLKGTRSLE (401 aa)) form a carboxyphosphate synthetic domain region. ATP-binding residues include R129, R169, G175, G176, K208, V210, E215, G241, I242, H243, Q284, and E298. Residues 133 to 327 (RNVMSRINGP…IAKVASKIAL (195 aa)) form the ATP-grasp 1 domain. Mg(2+)-binding residues include Q284, E298, and N300. Residues Q284, E298, and N300 each coordinate Mn(2+). The oligomerization domain stretch occupies residues 402-549 (IGKYSLEHKK…YSTYDVYDEV (148 aa)). Positions 550-932 (EVSKNKKVIV…ALYKGFIGAN (383 aa)) are carbamoyl phosphate synthetic domain. The region spanning 674 to 864 (DELLEKLKIA…IVDIATRVML (191 aa)) is the ATP-grasp 2 domain. The ATP site is built by R710, K749, L751, E755, G780, V781, H782, S783, Q823, and E835. 3 residues coordinate Mg(2+): Q823, E835, and N837. Residues Q823, E835, and N837 each contribute to the Mn(2+) site. Residues 933–1068 (MSIKKEKGTV…ETLYIFDLSN (136 aa)) enclose the MGS-like domain. The tract at residues 933–1068 (MSIKKEKGTV…ETLYIFDLSN (136 aa)) is allosteric domain.

Belongs to the CarB family. Composed of two chains; the small (or glutamine) chain promotes the hydrolysis of glutamine to ammonia, which is used by the large (or ammonia) chain to synthesize carbamoyl phosphate. Tetramer of heterodimers (alpha,beta)4. Requires Mg(2+) as cofactor. Mn(2+) is required as a cofactor.

It carries out the reaction hydrogencarbonate + L-glutamine + 2 ATP + H2O = carbamoyl phosphate + L-glutamate + 2 ADP + phosphate + 2 H(+). The catalysed reaction is hydrogencarbonate + NH4(+) + 2 ATP = carbamoyl phosphate + 2 ADP + phosphate + 2 H(+). The protein operates within amino-acid biosynthesis; L-arginine biosynthesis; carbamoyl phosphate from bicarbonate: step 1/1. It functions in the pathway pyrimidine metabolism; UMP biosynthesis via de novo pathway; (S)-dihydroorotate from bicarbonate: step 1/3. Large subunit of the glutamine-dependent carbamoyl phosphate synthetase (CPSase). CPSase catalyzes the formation of carbamoyl phosphate from the ammonia moiety of glutamine, carbonate, and phosphate donated by ATP, constituting the first step of 2 biosynthetic pathways, one leading to arginine and/or urea and the other to pyrimidine nucleotides. The large subunit (synthetase) binds the substrates ammonia (free or transferred from glutamine from the small subunit), hydrogencarbonate and ATP and carries out an ATP-coupled ligase reaction, activating hydrogencarbonate by forming carboxy phosphate which reacts with ammonia to form carbamoyl phosphate. This is Carbamoyl phosphate synthase large chain from Clostridium botulinum (strain Kyoto / Type A2).